A 472-amino-acid chain; its full sequence is Transmembrane protein 8B (472 aa).

The segment at 1–36 is disordered; it reads MNMPQSLGNQPLPPEPPSLGTPAEGPGTTSPPEHCW. Topologically, residues 1–233 are extracellular; the sequence is MNMPQSLGNQ…ADALTYGFQL (233 aa). Asparagine 92 and asparagine 100 each carry an N-linked (GlcNAc...) asparagine glycan. Residues 182-221 enclose the EGF-like domain; that stretch reads FLSPCVDDCGPYGQCKLLRTHNYLYAACECKAGWRGWGCT. 3 disulfides stabilise this stretch: cysteine 186–cysteine 196, cysteine 190–cysteine 209, and cysteine 211–cysteine 220. A helical membrane pass occupies residues 234-254; it reads LSTLLLCLSNLMFLPPVVLAI. Residues 255-257 are Cytoplasmic-facing; the sequence is RSR. A helical transmembrane segment spans residues 258–277; it reads YVLEAAVYTFTMFFSTFYHA. Residues 278–292 are Extracellular-facing; the sequence is CDQPGIVVFCIMDYD. Residues 293–313 traverse the membrane as a helical segment; sequence VLQFCDFLGSLMSVWVTVIAM. Over 314–315 the chain is Cytoplasmic; the sequence is AR. A helical membrane pass occupies residues 316–336; sequence LQPVVKQVLYLLGAMLLSMAL. The Extracellular portion of the chain corresponds to 337–342; it reads QLDRHG. A helical membrane pass occupies residues 343–363; that stretch reads LWNLLGPSLFALGILATAWTV. Topologically, residues 364–379 are cytoplasmic; sequence RSVRRRHCYPPTWRRW. The chain crosses the membrane as a helical span at residues 380-400; the sequence is LFYLCPGSLIAGSAVLLYAFV. The Extracellular portion of the chain corresponds to 401–405; sequence ETRDN. The chain crosses the membrane as a helical span at residues 406–426; sequence YFYIHSIWHMLIAGSVGFLLP. Topologically, residues 427-472 are cytoplasmic; that stretch reads PRAKTDHGVPSGARARGCGYQLCINEQEELGLVGPGGATVSSICAS.

This sequence belongs to the TMEM8 family. Isoform 2 (via its cytoplasmic part) interacts with EZR. Isoform 2 is N-glycosylated.

Its subcellular location is the cell membrane. The protein localises to the cytoplasm. It localises to the nucleus. The protein resides in the mitochondrion. It is found in the endoplasmic reticulum. Functionally, may function as a regulator of the EGFR pathway. Probable tumor suppressor which may function in cell growth, proliferation and adhesion. This Homo sapiens (Human) protein is Transmembrane protein 8B (TMEM8B).